The chain runs to 154 residues: Ribosome maturation factor RimP (154 aa).

The protein belongs to the RimP family.

Its subcellular location is the cytoplasm. Its function is as follows. Required for maturation of 30S ribosomal subunits. This Prochlorococcus marinus (strain MIT 9303) protein is Ribosome maturation factor RimP.